The chain runs to 2590 residues: 5-methylorsellinic acid synthase (2590 aa).

The tract at residues 6–255 is N-terminal acylcarrier protein transacylase domain (SAT); it reads LLCGSQAIQW…HNQVNRELFA (250 aa). The region spanning 369 to 784 is the Ketosynthase family 3 (KS3) domain; the sequence is GDSIAIVGMG…GSNAALIVTQ (416 aa). Residues cysteine 534, histidine 669, and histidine 707 each act as for beta-ketoacyl synthase activity in the active site. A malonyl-CoA:ACP transacylase (MAT) domain region spans residues 891–1191; that stretch reads LAFGGQTGNV…HAVNLGGPEP (301 aa). The active-site For acyl/malonyl transferase activity is the serine 978. Positions 1263-1393 are N-terminal hotdog fold; sequence PKLVSFVKYL…GTVNISSLTS (131 aa). Residues 1263-1569 form the PKS/mFAS DH domain; that stretch reads PKLVSFVKYL…FAKVPTASLK (307 aa). The product template (PT) domain stretch occupies residues 1267–1568; sequence SFVKYLDSNR…RFAKVPTASL (302 aa). Histidine 1297 serves as the catalytic Proton acceptor; for dehydratase activity. The tract at residues 1421-1569 is C-terminal hotdog fold; the sequence is TSAIQGSLVY…FAKVPTASLK (149 aa). Aspartate 1481 functions as the Proton donor; for dehydratase activity in the catalytic mechanism. A disordered region spans residues 1587 to 1612; the sequence is LKVTEPSANVPKAQPVSTYPKPMKPA. Carrier domains are found at residues 1617 to 1691 and 1736 to 1812; these read AQIR…ASGT and SAQA…IPKP. O-(pantetheine 4'-phosphoryl)serine occurs at positions 1651 and 1772. Residues 1980-2212 are methyltransferase (CMeT) domain; that stretch reads QHRGEHKLLN…GFRHVDWSDD (233 aa). Residues 2282 to 2590 form a thioesterase (TE) domain region; sequence LMIHGGGHIM…EGYEFLLRHL (309 aa).

The enzyme catalyses 3 malonyl-CoA + acetyl-CoA + S-adenosyl-L-methionine + H(+) = 5-methylorsellinate + S-adenosyl-L-homocysteine + 3 CO2 + 4 CoA. It participates in secondary metabolite biosynthesis. Functionally, non-reducing polyketide synthase; part of the cluster A that mediates the biosynthesis of azasperpyranones, members of the azaphilone family that exhibit anti-cancer activities. Azasperpyranones are synthesized by 2 clusters, A and B. Cluster A is responsible for the production of the polyhydric phenol moiety while the azaphilonoid scaffold is produced by the cluster B. The non-reducing polyketide synthase ATEG_03629 produces 5-methyl orsellinic acid, which is then reduced to 5-methyl orsellinic aldehyde by the NRPS-like protein ATEG_03630. 5-methyl orsellinic aldehyde is then first hydroxylated by the FAD-dependent monooxygenase ATEG_03635 and subsequently hydroxylated by the cytochrome P450 monooxygenase ATEG_03631 to produce the unstable polyhydric phenol precursor of azasperpyranones. On the other hand, the polyketide synthase ATEG_07659 is responsible for producing the 3,5-dimethyloctadienone moiety from acetyl-CoA, three malonyl-CoA, and two S-adenosyl methionines (SAM). The 3,5-dimethyloctadienone moiety is then loaded onto the SAT domain of ATEG_07661 and extended with four malonyl-CoA and one SAM, which leads to the formation of 2,4-dihydroxy-6-(5,7-dimethyl-2-oxo-trans-3-trans-5-nonadienyl)-3-methylbenzaldehyde (compound 8) after reductive release and aldol condensation. The FAD-dependent monooxygenase ATEG_07662 is the next enzyme in the biosynthesis sequence and hydroxylates the side chain at the benzylic position of compound 8. In Aspergillus nidulans, afoF, the ortholog of the FAD-dependent oxygenase ATEG_07660, is the key enzyme for the biosynthesis of asperfuranone by catalyzing the hydroxylation at C-8 of to prevent the formation of a six-membered ring hemiacetal intermediate and thus facilitating the formation of a five-membered ring to produce asperfuranone. In Aspergillus terreus, ATEG_07660 is probably not functional, which leads to the formation of the six-membered ring hemiacetal intermediate presperpyranone instead of asperfuranone. Finally, ATEG_03636 is involved in the condensation of the polyhydric phenol moiety produced by cluster A and the perasperpyranone precursor produced by cluster B, to yield azasperpyranone A. Further modifications of azasperpyranone A result in the production of derivatives, including azasperpyranone B to F. This Aspergillus terreus (strain NIH 2624 / FGSC A1156) protein is 5-methylorsellinic acid synthase.